Reading from the N-terminus, the 339-residue chain is ADP,ATP carrier protein (339 aa).

3 Solcar repeats span residues 39-133 (MAFV…IKGL), 145-234 (RFFV…AKGV), and 246-328 (AKWA…IKKF). Transmembrane regions (helical) follow at residues 41 to 70 (FVKD…LLLQ), 110 to 134 (LANV…KGLF), 144 to 164 (WRFF…SLLI), 212 to 232 (VSVQ…DTAK), and 245 to 265 (FAKW…SYPF). Residues R115 and K127 each coordinate ADP. An ADP-binding site is contributed by R269. The tract at residues 269–274 (RRRLMM) is important for transport activity. Residues 269-274 (RRRLMM) carry the Nucleotide carrier signature motif motif. Residues 305-322 (AWSNVLRGAGGAFVLVLY) traverse the membrane as a helical segment.

The protein belongs to the mitochondrial carrier (TC 2.A.29) family. Monomer.

It is found in the mitochondrion inner membrane. It catalyses the reaction ADP(in) + ATP(out) = ADP(out) + ATP(in). With respect to regulation, the matrix-open state (m-state) is inhibited by the membrane-permeable bongkrekic acid (BKA). The cytoplasmic-open state (c-state) is inhibited by the membrane-impermeable toxic inhibitor carboxyatractyloside (CATR). Functionally, ADP:ATP antiporter that mediates import of ADP into the mitochondrial matrix for ATP synthesis, and export of ATP out to fuel the cell. Cycles between the cytoplasmic-open state (c-state) and the matrix-open state (m-state): operates by the alternating access mechanism with a single substrate-binding site intermittently exposed to either the cytosolic (c-state) or matrix (m-state) side of the inner mitochondrial membrane. This is ADP,ATP carrier protein from Parachlorella kessleri (Green alga).